A 118-amino-acid polypeptide reads, in one-letter code: UPF0251 protein TTE1845 (118 aa).

Belongs to the UPF0251 family.

This chain is UPF0251 protein TTE1845, found in Caldanaerobacter subterraneus subsp. tengcongensis (strain DSM 15242 / JCM 11007 / NBRC 100824 / MB4) (Thermoanaerobacter tengcongensis).